The sequence spans 1070 residues: Carbamoyl phosphate synthase large chain (1070 aa).

The carboxyphosphate synthetic domain stretch occupies residues 1–401; sequence MPKRDDIKTI…ALLKAVRSLE (401 aa). Positions 129, 169, 175, 176, 208, 210, 215, 241, 242, 243, 284, and 298 each coordinate ATP. In terms of domain architecture, ATP-grasp 1 spans 133-327; sequence RDLMNELGEP…IAKLAAKIAV (195 aa). Residues Gln-284, Glu-298, and Asn-300 each contribute to the Mg(2+) site. 3 residues coordinate Mn(2+): Gln-284, Glu-298, and Asn-300. The interval 402–546 is oligomerization domain; that stretch reads IGADHLLLEE…YSTYEEENES (145 aa). Positions 547 to 929 are carbamoyl phosphate synthetic domain; it reads TRSAKESVIV…ALYKGFVASG (383 aa). Positions 671 to 861 constitute an ATP-grasp 2 domain; that stretch reads EKALEILQIP…MANVATRVIL (191 aa). Positions 707, 746, 748, 752, 777, 778, 779, 780, 820, and 832 each coordinate ATP. Positions 820, 832, and 834 each coordinate Mg(2+). Mn(2+) is bound by residues Gln-820, Glu-832, and Asn-834. One can recognise an MGS-like domain in the interval 930 to 1070; that stretch reads TTMHDYGTVL…SEVKQPKARV (141 aa). The allosteric domain stretch occupies residues 930–1070; it reads TTMHDYGTVL…SEVKQPKARV (141 aa).

The protein belongs to the CarB family. As to quaternary structure, composed of two chains; the small (or glutamine) chain promotes the hydrolysis of glutamine to ammonia, which is used by the large (or ammonia) chain to synthesize carbamoyl phosphate. Tetramer of heterodimers (alpha,beta)4. It depends on Mg(2+) as a cofactor. The cofactor is Mn(2+).

It catalyses the reaction hydrogencarbonate + L-glutamine + 2 ATP + H2O = carbamoyl phosphate + L-glutamate + 2 ADP + phosphate + 2 H(+). The enzyme catalyses hydrogencarbonate + NH4(+) + 2 ATP = carbamoyl phosphate + 2 ADP + phosphate + 2 H(+). Its pathway is amino-acid biosynthesis; L-arginine biosynthesis; carbamoyl phosphate from bicarbonate: step 1/1. The protein operates within pyrimidine metabolism; UMP biosynthesis via de novo pathway; (S)-dihydroorotate from bicarbonate: step 1/3. In terms of biological role, large subunit of the glutamine-dependent carbamoyl phosphate synthetase (CPSase). CPSase catalyzes the formation of carbamoyl phosphate from the ammonia moiety of glutamine, carbonate, and phosphate donated by ATP, constituting the first step of 2 biosynthetic pathways, one leading to arginine and/or urea and the other to pyrimidine nucleotides. The large subunit (synthetase) binds the substrates ammonia (free or transferred from glutamine from the small subunit), hydrogencarbonate and ATP and carries out an ATP-coupled ligase reaction, activating hydrogencarbonate by forming carboxy phosphate which reacts with ammonia to form carbamoyl phosphate. The polypeptide is Carbamoyl phosphate synthase large chain (Listeria monocytogenes serotype 4b (strain F2365)).